The chain runs to 257 residues: Thiazole synthase (257 aa).

The active-site Schiff-base intermediate with DXP is K95. 1-deoxy-D-xylulose 5-phosphate is bound by residues G156, 182–183 (AG), and 204–205 (NT).

It belongs to the ThiG family. As to quaternary structure, homotetramer. Forms heterodimers with either ThiH or ThiS.

Its subcellular location is the cytoplasm. The catalysed reaction is [ThiS sulfur-carrier protein]-C-terminal-Gly-aminoethanethioate + 2-iminoacetate + 1-deoxy-D-xylulose 5-phosphate = [ThiS sulfur-carrier protein]-C-terminal Gly-Gly + 2-[(2R,5Z)-2-carboxy-4-methylthiazol-5(2H)-ylidene]ethyl phosphate + 2 H2O + H(+). It participates in cofactor biosynthesis; thiamine diphosphate biosynthesis. In terms of biological role, catalyzes the rearrangement of 1-deoxy-D-xylulose 5-phosphate (DXP) to produce the thiazole phosphate moiety of thiamine. Sulfur is provided by the thiocarboxylate moiety of the carrier protein ThiS. In vitro, sulfur can be provided by H(2)S. This is Thiazole synthase from Vibrio vulnificus (strain CMCP6).